The primary structure comprises 340 residues: Manganese-dependent ADP-ribose/CDP-alcohol diphosphatase (340 aa).

Position 1 is an N-acetylmethionine (methionine 1). Zn(2+) contacts are provided by aspartate 25, glutamine 27, aspartate 74, asparagine 110, histidine 241, histidine 278, and histidine 280.

It belongs to the ADPRibase-Mn family. In terms of assembly, monomer. Requires Mg(2+) as cofactor.

It catalyses the reaction CDP-choline + H2O = phosphocholine + CMP + 2 H(+). The catalysed reaction is ADP-D-ribose + H2O = D-ribose 5-phosphate + AMP + 2 H(+). The enzyme catalyses CDP-glycerol + H2O = sn-glycerol 3-phosphate + CMP + 2 H(+). In terms of biological role, hydrolyzes ADP-ribose, IDP-ribose, CDP-glycerol, CDP-choline and CDP-ethanolamine, but not other non-reducing ADP-sugars or CDP-glucose. May be involved in immune cell signaling as suggested by the second-messenger role of ADP-ribose, which activates TRPM2 as a mediator of oxidative/nitrosative stress. In Mus musculus (Mouse), this protein is Manganese-dependent ADP-ribose/CDP-alcohol diphosphatase (Adprm).